A 437-amino-acid chain; its full sequence is Ankyrin repeat domain-containing protein OPG015 (437 aa).

ANK repeat units lie at residues 117–146 (QDLL…VIYK), 220–249 (GGRT…NVNA), and 253–290 (NGYT…SIDC).

Belongs to the orthopoxvirus OPG015 family.

May be involved in virus-host protein interaction through the ankyrin repeats. The protein is Ankyrin repeat domain-containing protein OPG015 (OPG015) of Monkeypox virus.